Consider the following 812-residue polypeptide: Valine--tRNA ligase (812 aa).

Positions 46-56 (PTVSGQLHIGH) match the 'HIGH' region motif. A 'KMSKS' region motif is present at residues 536 to 540 (KMSKS). Lys539 is an ATP binding site.

Belongs to the class-I aminoacyl-tRNA synthetase family. ValS type 2 subfamily. As to quaternary structure, monomer.

The protein resides in the cytoplasm. The enzyme catalyses tRNA(Val) + L-valine + ATP = L-valyl-tRNA(Val) + AMP + diphosphate. Functionally, catalyzes the attachment of valine to tRNA(Val). As ValRS can inadvertently accommodate and process structurally similar amino acids such as threonine, to avoid such errors, it has a 'posttransfer' editing activity that hydrolyzes mischarged Thr-tRNA(Val) in a tRNA-dependent manner. The chain is Valine--tRNA ligase from Rickettsia rickettsii (strain Iowa).